The primary structure comprises 256 residues: Imidazole glycerol phosphate synthase subunit HisF (256 aa).

Residues Asp-11 and Asp-130 contribute to the active site.

It belongs to the HisA/HisF family. In terms of assembly, heterodimer of HisH and HisF.

The protein localises to the cytoplasm. The catalysed reaction is 5-[(5-phospho-1-deoxy-D-ribulos-1-ylimino)methylamino]-1-(5-phospho-beta-D-ribosyl)imidazole-4-carboxamide + L-glutamine = D-erythro-1-(imidazol-4-yl)glycerol 3-phosphate + 5-amino-1-(5-phospho-beta-D-ribosyl)imidazole-4-carboxamide + L-glutamate + H(+). Its pathway is amino-acid biosynthesis; L-histidine biosynthesis; L-histidine from 5-phospho-alpha-D-ribose 1-diphosphate: step 5/9. Functionally, IGPS catalyzes the conversion of PRFAR and glutamine to IGP, AICAR and glutamate. The HisF subunit catalyzes the cyclization activity that produces IGP and AICAR from PRFAR using the ammonia provided by the HisH subunit. The chain is Imidazole glycerol phosphate synthase subunit HisF from Prochlorococcus marinus (strain NATL1A).